A 69-amino-acid chain; its full sequence is DNA-directed RNA polymerase subunit omega (69 aa).

Belongs to the RNA polymerase subunit omega family. In terms of assembly, the RNAP catalytic core consists of 2 alpha, 1 beta, 1 beta' and 1 omega subunit. When a sigma factor is associated with the core the holoenzyme is formed, which can initiate transcription.

The catalysed reaction is RNA(n) + a ribonucleoside 5'-triphosphate = RNA(n+1) + diphosphate. Functionally, promotes RNA polymerase assembly. Latches the N- and C-terminal regions of the beta' subunit thereby facilitating its interaction with the beta and alpha subunits. The polypeptide is DNA-directed RNA polymerase subunit omega (Geobacter metallireducens (strain ATCC 53774 / DSM 7210 / GS-15)).